A 749-amino-acid polypeptide reads, in one-letter code: Probable galactinol--sucrose galactosyltransferase 6 (749 aa).

Belongs to the glycosyl hydrolases 36 family.

The enzyme catalyses alpha-D-galactosyl-(1-&gt;3)-1D-myo-inositol + sucrose = raffinose + myo-inositol. Transglycosidase operating by a ping-pong reaction mechanism. Involved in the synthesis of raffinose, a major soluble carbohydrate in seeds, roots and tubers. This is Probable galactinol--sucrose galactosyltransferase 6 (RFS6) from Arabidopsis thaliana (Mouse-ear cress).